The chain runs to 103 residues: Histone H4 (103 aa).

Residues 1 to 14 (MSGRGKGGKGLGKG) are compositionally biased toward gly residues. The disordered stretch occupies residues 1–20 (MSGRGKGGKGLGKGGAKRHR). Residues 17–21 (KRHRK) mediate DNA binding.

It belongs to the histone H4 family. As to quaternary structure, the nucleosome is a histone octamer containing two molecules each of H2A, H2B, H3 and H4 assembled in one H3-H4 heterotetramer and two H2A-H2B heterodimers. The octamer wraps approximately 147 bp of DNA.

The protein resides in the nucleus. Its subcellular location is the chromosome. Its function is as follows. Core component of nucleosome. Nucleosomes wrap and compact DNA into chromatin, limiting DNA accessibility to the cellular machineries which require DNA as a template. Histones thereby play a central role in transcription regulation, DNA repair, DNA replication and chromosomal stability. DNA accessibility is regulated via a complex set of post-translational modifications of histones, also called histone code, and nucleosome remodeling. The chain is Histone H4 (H4-I) from Volvox carteri (Green alga).